Reading from the N-terminus, the 367-residue chain is Aminomethyltransferase (367 aa).

The protein belongs to the GcvT family. The glycine cleavage system is composed of four proteins: P, T, L and H.

It catalyses the reaction N(6)-[(R)-S(8)-aminomethyldihydrolipoyl]-L-lysyl-[protein] + (6S)-5,6,7,8-tetrahydrofolate = N(6)-[(R)-dihydrolipoyl]-L-lysyl-[protein] + (6R)-5,10-methylene-5,6,7,8-tetrahydrofolate + NH4(+). The glycine cleavage system catalyzes the degradation of glycine. This Lysinibacillus sphaericus (strain C3-41) protein is Aminomethyltransferase.